The sequence spans 610 residues: Chaperone protein DnaK (610 aa).

Residue Thr-173 is modified to Phosphothreonine; by autocatalysis. Residues 579–592 are compositionally biased toward low complexity; it reads QQQQAQGANAGQNN. The interval 579–610 is disordered; it reads QQQQAQGANAGQNNDSTVEDAEFKEVKDDDKK. Residues 599–610 show a composition bias toward basic and acidic residues; that stretch reads AEFKEVKDDDKK.

Belongs to the heat shock protein 70 family.

Functionally, acts as a chaperone. This chain is Chaperone protein DnaK, found in Staphylococcus aureus (strain bovine RF122 / ET3-1).